Here is a 179-residue protein sequence, read N- to C-terminus: Large ribosomal subunit protein uL5 (179 aa).

It belongs to the universal ribosomal protein uL5 family. Part of the 50S ribosomal subunit; part of the 5S rRNA/L5/L18/L25 subcomplex. Contacts the 5S rRNA and the P site tRNA. Forms a bridge to the 30S subunit in the 70S ribosome.

This is one of the proteins that bind and probably mediate the attachment of the 5S RNA into the large ribosomal subunit, where it forms part of the central protuberance. In the 70S ribosome it contacts protein S13 of the 30S subunit (bridge B1b), connecting the 2 subunits; this bridge is implicated in subunit movement. Contacts the P site tRNA; the 5S rRNA and some of its associated proteins might help stabilize positioning of ribosome-bound tRNAs. This Aeromonas salmonicida (strain A449) protein is Large ribosomal subunit protein uL5.